The chain runs to 426 residues: Mediator of RNA polymerase II transcription subunit 1 (426 aa).

Residues 324–356 (VGDAPAPAAQPPLHRRRSSNKGCRRASAAESAT) are disordered. Over residues 336–347 (LHRRRSSNKGCR) the composition is skewed to basic residues.

Belongs to the Mediator complex subunit 1 family. Component of the Mediator complex.

It is found in the nucleus. In terms of biological role, component of the Mediator complex, a coactivator involved in the regulated transcription of nearly all RNA polymerase II-dependent genes. Mediator functions as a bridge to convey information from gene-specific regulatory proteins to the basal RNA polymerase II transcription machinery. Mediator is recruited to promoters by direct interactions with regulatory proteins and serves as a scaffold for the assembly of a functional preinitiation complex with RNA polymerase II and the general transcription factors. The polypeptide is Mediator of RNA polymerase II transcription subunit 1 (MED1) (Eremothecium gossypii (strain ATCC 10895 / CBS 109.51 / FGSC 9923 / NRRL Y-1056) (Yeast)).